We begin with the raw amino-acid sequence, 136 residues long: Small ribosomal subunit protein uS8c (136 aa).

This sequence belongs to the universal ribosomal protein uS8 family. In terms of assembly, part of the 30S ribosomal subunit.

The protein localises to the plastid. Its subcellular location is the chloroplast. Its function is as follows. One of the primary rRNA binding proteins, it binds directly to 16S rRNA central domain where it helps coordinate assembly of the platform of the 30S subunit. In Oryza sativa subsp. indica (Rice), this protein is Small ribosomal subunit protein uS8c (rps8).